Here is a 290-residue protein sequence, read N- to C-terminus: MKRIMLFLVTNLAVMLVLGVVLNILFSVLGINKSSISGLLMFCAVFGFGGSFISLLMSKWMAKRSYGVQVIEQPRNETEHWLVSTVARQAREAGIKMPEVGIYDSPEMNAFATGARRDDSLVAVSSGLLYSMSRDEAEAVLAHEVSHVANGDMVTLTLIQGVVNTFVMFFARIVAGVISNFFSSNNDEESSSSGGFAYMITVFVLEMAFGVLASMIVMWFSRQREFRADAGAAKLAGRDKMIAALQRLSRGAEPQMEGSMMAFGINGKRSMSELFMSHPPIEQRIAALRG.

The next 2 membrane-spanning stretches (helical) occupy residues 6 to 26 (LFLV…NILF) and 36 to 56 (ISGL…ISLL). H143 contributes to the Zn(2+) binding site. Residue E144 is part of the active site. H147 contributes to the Zn(2+) binding site. 2 consecutive transmembrane segments (helical) span residues 158–178 (LIQG…AGVI) and 200–220 (ITVF…VMWF). E225 contacts Zn(2+).

Belongs to the peptidase M48B family. It depends on Zn(2+) as a cofactor.

The protein localises to the cell inner membrane. This chain is Protease HtpX, found in Aeromonas salmonicida (strain A449).